The chain runs to 149 residues: Large ribosomal subunit protein bL9 (149 aa).

Residue Lys-89 is modified to N6-acetyllysine.

It belongs to the bacterial ribosomal protein bL9 family.

Functionally, binds to the 23S rRNA. This is Large ribosomal subunit protein bL9 from Shigella dysenteriae serotype 1 (strain Sd197).